The chain runs to 438 residues: Glutamyl-tRNA(Gln) amidotransferase subunit D (438 aa).

Positions 92-422 (PTITILGTGG…REAKKMMLTN (331 aa)) constitute an Asparaginase/glutaminase domain. Catalysis depends on residues T102, T178, D179, and K256.

Belongs to the asparaginase 1 family. GatD subfamily. Heterodimer of GatD and GatE.

The catalysed reaction is L-glutamyl-tRNA(Gln) + L-glutamine + ATP + H2O = L-glutaminyl-tRNA(Gln) + L-glutamate + ADP + phosphate + H(+). Functionally, allows the formation of correctly charged Gln-tRNA(Gln) through the transamidation of misacylated Glu-tRNA(Gln) in organisms which lack glutaminyl-tRNA synthetase. The reaction takes place in the presence of glutamine and ATP through an activated gamma-phospho-Glu-tRNA(Gln). The GatDE system is specific for glutamate and does not act on aspartate. In Pyrococcus furiosus (strain ATCC 43587 / DSM 3638 / JCM 8422 / Vc1), this protein is Glutamyl-tRNA(Gln) amidotransferase subunit D.